The following is a 154-amino-acid chain: UPF0178 protein ABC1688 (154 aa).

The protein belongs to the UPF0178 family.

The polypeptide is UPF0178 protein ABC1688 (Shouchella clausii (strain KSM-K16) (Alkalihalobacillus clausii)).